A 91-amino-acid polypeptide reads, in one-letter code: Putative regulatory protein PTH_1796 (91 aa).

It belongs to the RemA family.

This chain is Putative regulatory protein PTH_1796, found in Pelotomaculum thermopropionicum (strain DSM 13744 / JCM 10971 / SI).